We begin with the raw amino-acid sequence, 185 residues long: Prorelaxin (185 aa).

Residues 1–24 (MPRLFLFHLLGVCLLLNQFSRAVA) form the signal peptide. Intrachain disulfides connect cysteine 35–cysteine 172, cysteine 47–cysteine 185, and cysteine 171–cysteine 176. The propeptide at 56–157 (SLNQEDAPLK…LRSLGLDTHS (102 aa)) is connecting peptide.

The protein belongs to the insulin family. In terms of assembly, heterodimer of a B chain and an A chain linked by two disulfide bonds.

It localises to the secreted. In terms of biological role, relaxin is an ovarian hormone that acts with estrogen to produce dilatation of the birth canal in many mammals. May be involved in remodeling of connective tissues during pregnancy, promoting growth of pubic ligaments and ripening of the cervix. This chain is Prorelaxin (RLN), found in Macaca mulatta (Rhesus macaque).